A 296-amino-acid chain; its full sequence is Peptide transport system permease protein SapC (296 aa).

Residues 1–28 (MPYDSVYSEKRPPGTLRTAWRKFYSDAS) lie on the Cytoplasmic side of the membrane. The helical transmembrane segment at 29–49 (AMVGLYGCAGLAVLCIFGGWF) threads the bilayer. At 50 to 98 (APYGIDQQFLGYQLLPPSWSRYGEVSFFLGTDDLGRDVLSRLLSGAAPT) the chain is on the periplasmic side. Residues 99-119 (VGGAFVVTLAATICGLVLGTF) traverse the membrane as a helical segment. The region spanning 99-284 (VGGAFVVTLA…ISVLLVNLLG (186 aa)) is the ABC transmembrane type-1 domain. Residues 120–133 (AGATHGLRSAVLNH) lie on the Cytoplasmic side of the membrane. The chain crosses the membrane as a helical span at residues 134–154 (ILDTLLAIPSLLLAIIVVAFA). Residues 155 to 196 (GPSLSHAMFAVWLALLPRMVRSIYSMVHDELEKEYVIAARLD) lie on the Periplasmic side of the membrane. A helical membrane pass occupies residues 197–217 (GASTLNILWFAVMPNITAGLV). Residues 218–222 (TEITR) are Cytoplasmic-facing. A helical transmembrane segment spans residues 223–243 (ALSMAILDIAALGFLDLGAQL). Residues 244-257 (PSPEWGAMLGDALE) are Periplasmic-facing. The helical transmembrane segment at 258 to 278 (LIYVAPWTVMLPGAAIMISVL) threads the bilayer. At 279–296 (LVNLLGDGVRRAIIAGVE) the chain is on the cytoplasmic side.

Belongs to the binding-protein-dependent transport system permease family. OppBC subfamily.

Its subcellular location is the cell inner membrane. Functionally, involved in a peptide intake transport system that plays a role in the resistance to antimicrobial peptides. The sequence is that of Peptide transport system permease protein SapC (sapC) from Escherichia coli O6:H1 (strain CFT073 / ATCC 700928 / UPEC).